A 98-amino-acid chain; its full sequence is NADH-ubiquinone oxidoreductase chain 4L (98 aa).

Transmembrane regions (helical) follow at residues 1 to 21 (MALT…GLLM), 29 to 49 (SLLC…LTIL), and 61 to 81 (IILL…LVMV).

This sequence belongs to the complex I subunit 4L family. As to quaternary structure, core subunit of respiratory chain NADH dehydrogenase (Complex I) which is composed of 45 different subunits.

It is found in the mitochondrion inner membrane. It catalyses the reaction a ubiquinone + NADH + 5 H(+)(in) = a ubiquinol + NAD(+) + 4 H(+)(out). Core subunit of the mitochondrial membrane respiratory chain NADH dehydrogenase (Complex I) which catalyzes electron transfer from NADH through the respiratory chain, using ubiquinone as an electron acceptor. Part of the enzyme membrane arm which is embedded in the lipid bilayer and involved in proton translocation. The chain is NADH-ubiquinone oxidoreductase chain 4L (MT-ND4L) from Pteropus dasymallus (Ryukyu flying fox).